The primary structure comprises 144 residues: Large ribosomal subunit protein uL15 (144 aa).

The disordered stretch occupies residues 1-57; it reads MRLNTLSPAAGSKHAPKRVGRGIGSGLGKTGGRGHKGQKSRSGGKVRPGFEGGQMPL. Residues 21–31 show a composition bias toward gly residues; sequence RGIGSGLGKTG. Residues 32–44 show a composition bias toward basic residues; it reads GRGHKGQKSRSGG.

Belongs to the universal ribosomal protein uL15 family. In terms of assembly, part of the 50S ribosomal subunit.

Functionally, binds to the 23S rRNA. This Vibrio vulnificus (strain CMCP6) protein is Large ribosomal subunit protein uL15.